We begin with the raw amino-acid sequence, 317 residues long: MYKLIYSVLIAFFIAMLEGPILIPLLHKFKFGQSIREDGPKTHLKKAGTPTMGGIIFILATFITMAVIVKKPSDEAMIALYAFIGFGIIGAIDDTLKIVRRKNLGLRAYQKMILLLAISGIFAYYSANNPYIGTSIIIPFKRDTWDLGVFYIPFIIVYFAATTNAVNLTDGLDGLATSVTLLVMTFLALVSFAMGHITLAVFCAILAGALLGFLKYNAFPAQIFMGDTGSLALGGAIGAVAMILKLPLLVIIIGGIYVLEALSVIFQVLSFKLTGKRIFKMAPIHHHFELSGWHETRVVSVFCIVTVILCLVGFLSL.

Helical transmembrane passes span 4–24 (LIYS…ILIP), 49–69 (TPTM…AVIV), 76–96 (AMIA…DDTL), 112–132 (MILL…NPYI), 147–167 (LGVF…NAVN), 186–206 (FLAL…CAIL), 223–243 (IFMG…VAMI), 246–266 (LPLL…SVIF), and 297–317 (RVVS…FLSL).

It belongs to the glycosyltransferase 4 family. MraY subfamily. Mg(2+) is required as a cofactor.

The protein localises to the cell membrane. It catalyses the reaction UDP-N-acetyl-alpha-D-muramoyl-L-alanyl-gamma-D-glutamyl-meso-2,6-diaminopimeloyl-D-alanyl-D-alanine + di-trans,octa-cis-undecaprenyl phosphate = di-trans,octa-cis-undecaprenyl diphospho-N-acetyl-alpha-D-muramoyl-L-alanyl-D-glutamyl-meso-2,6-diaminopimeloyl-D-alanyl-D-alanine + UMP. It participates in cell wall biogenesis; peptidoglycan biosynthesis. Functionally, catalyzes the initial step of the lipid cycle reactions in the biosynthesis of the cell wall peptidoglycan: transfers peptidoglycan precursor phospho-MurNAc-pentapeptide from UDP-MurNAc-pentapeptide onto the lipid carrier undecaprenyl phosphate, yielding undecaprenyl-pyrophosphoryl-MurNAc-pentapeptide, known as lipid I. The polypeptide is Phospho-N-acetylmuramoyl-pentapeptide-transferase (Clostridium kluyveri (strain NBRC 12016)).